The chain runs to 434 residues: 3-phosphoshikimate 1-carboxyvinyltransferase (434 aa).

3-phosphoshikimate-binding residues include lysine 22, serine 23, and arginine 27. A phosphoenolpyruvate-binding site is contributed by lysine 22. Phosphoenolpyruvate-binding residues include glycine 93 and arginine 121. 3-phosphoshikimate-binding residues include serine 168, serine 169, glutamine 170, serine 199, aspartate 320, and lysine 347. Position 170 (glutamine 170) interacts with phosphoenolpyruvate. Aspartate 320 serves as the catalytic Proton acceptor. Phosphoenolpyruvate is bound by residues arginine 351, arginine 394, and lysine 419.

Belongs to the EPSP synthase family. As to quaternary structure, monomer.

It is found in the cytoplasm. It catalyses the reaction 3-phosphoshikimate + phosphoenolpyruvate = 5-O-(1-carboxyvinyl)-3-phosphoshikimate + phosphate. Its pathway is metabolic intermediate biosynthesis; chorismate biosynthesis; chorismate from D-erythrose 4-phosphate and phosphoenolpyruvate: step 6/7. Catalyzes the transfer of the enolpyruvyl moiety of phosphoenolpyruvate (PEP) to the 5-hydroxyl of shikimate-3-phosphate (S3P) to produce enolpyruvyl shikimate-3-phosphate and inorganic phosphate. The polypeptide is 3-phosphoshikimate 1-carboxyvinyltransferase (Paraburkholderia phytofirmans (strain DSM 17436 / LMG 22146 / PsJN) (Burkholderia phytofirmans)).